Here is a 535-residue protein sequence, read N- to C-terminus: CTP synthase (535 aa).

Residues 1–267 (MTKYIFVTGG…DKLVCEHMKL (267 aa)) are amidoligase domain. Ser13 contacts CTP. Residue Ser13 participates in UTP binding. 14 to 19 (SLGKGI) lines the ATP pocket. Tyr54 contributes to the L-glutamine binding site. Asp71 provides a ligand contact to ATP. The Mg(2+) site is built by Asp71 and Glu141. CTP-binding positions include 148–150 (DIE), 188–193 (KTKPTQ), and Lys224. UTP-binding positions include 188-193 (KTKPTQ) and Lys224. The Glutamine amidotransferase type-1 domain occupies 292 to 534 (TIGLVGKYVE…IGASVEAANQ (243 aa)). Gly354 lines the L-glutamine pocket. Cys381 (nucleophile; for glutamine hydrolysis) is an active-site residue. Residues 382–385 (LGMQ), Glu405, and Arg462 each bind L-glutamine. Catalysis depends on residues His507 and Glu509.

The protein belongs to the CTP synthase family. In terms of assembly, homotetramer. Interacts with BrxC.

The enzyme catalyses UTP + L-glutamine + ATP + H2O = CTP + L-glutamate + ADP + phosphate + 2 H(+). It carries out the reaction L-glutamine + H2O = L-glutamate + NH4(+). The catalysed reaction is UTP + NH4(+) + ATP = CTP + ADP + phosphate + 2 H(+). The protein operates within pyrimidine metabolism; CTP biosynthesis via de novo pathway; CTP from UDP: step 2/2. With respect to regulation, allosterically activated by GTP, when glutamine is the substrate; GTP has no effect on the reaction when ammonia is the substrate. The allosteric effector GTP functions by stabilizing the protein conformation that binds the tetrahedral intermediate(s) formed during glutamine hydrolysis. Inhibited by the product CTP, via allosteric rather than competitive inhibition. Catalyzes the ATP-dependent amination of UTP to CTP with either L-glutamine or ammonia as the source of nitrogen. Regulates intracellular CTP levels through interactions with the four ribonucleotide triphosphates. The polypeptide is CTP synthase (Bacillus subtilis (strain 168)).